The primary structure comprises 433 residues: 23S rRNA (uracil(1939)-C(5))-methyltransferase RlmD (433 aa).

The TRAM domain occupies 10–68 (RTTTRQIITVSVNDLDSFGQGVARHNGKTLFIPGLLPQENAEVTVTEDKKQYARAKVVR). Residues Cys81, Cys87, Cys90, and Cys162 each contribute to the [4Fe-4S] cluster site. Gln265, Phe294, Asn299, Glu315, Asn342, and Asp363 together coordinate S-adenosyl-L-methionine. Cys389 serves as the catalytic Nucleophile.

This sequence belongs to the class I-like SAM-binding methyltransferase superfamily. RNA M5U methyltransferase family. RlmD subfamily.

It catalyses the reaction uridine(1939) in 23S rRNA + S-adenosyl-L-methionine = 5-methyluridine(1939) in 23S rRNA + S-adenosyl-L-homocysteine + H(+). Its function is as follows. Catalyzes the formation of 5-methyl-uridine at position 1939 (m5U1939) in 23S rRNA. This chain is 23S rRNA (uracil(1939)-C(5))-methyltransferase RlmD, found in Shigella boydii serotype 4 (strain Sb227).